The primary structure comprises 88 residues: Eclosion hormone (88 aa).

A signal peptide spans 1–26 (MAGKVTVAFFMFAMIAFLANFGYVEC). Disulfide bonds link cysteine 40–cysteine 64, cysteine 44–cysteine 60, and cysteine 47–cysteine 75.

This sequence belongs to the insect eclosion hormone family.

The protein localises to the secreted. In terms of biological role, neuropeptide that triggers the performance of ecdysis behaviors at the end of a molt. It triggers adult behavior patterns: larval, pupal and adult ecdysis, and plasticization during the molt. This is Eclosion hormone from Manduca sexta (Tobacco hawkmoth).